The chain runs to 380 residues: Queuine tRNA-ribosyltransferase (380 aa).

Residue D96 is the Proton acceptor of the active site. Substrate is bound by residues 96 to 100, D150, Q193, and G220; that span reads DSGGF. The RNA binding stretch occupies residues 251–257; the sequence is GVGAPDS. D270 acts as the Nucleophile in catalysis. Positions 275–279 are RNA binding; important for wobble base 34 recognition; the sequence is TRIAR. Residues C308, C310, C313, and H339 each contribute to the Zn(2+) site.

The protein belongs to the queuine tRNA-ribosyltransferase family. As to quaternary structure, homodimer. Within each dimer, one monomer is responsible for RNA recognition and catalysis, while the other monomer binds to the replacement base PreQ1. It depends on Zn(2+) as a cofactor.

The enzyme catalyses 7-aminomethyl-7-carbaguanine + guanosine(34) in tRNA = 7-aminomethyl-7-carbaguanosine(34) in tRNA + guanine. It participates in tRNA modification; tRNA-queuosine biosynthesis. Functionally, catalyzes the base-exchange of a guanine (G) residue with the queuine precursor 7-aminomethyl-7-deazaguanine (PreQ1) at position 34 (anticodon wobble position) in tRNAs with GU(N) anticodons (tRNA-Asp, -Asn, -His and -Tyr). Catalysis occurs through a double-displacement mechanism. The nucleophile active site attacks the C1' of nucleotide 34 to detach the guanine base from the RNA, forming a covalent enzyme-RNA intermediate. The proton acceptor active site deprotonates the incoming PreQ1, allowing a nucleophilic attack on the C1' of the ribose to form the product. After dissociation, two additional enzymatic reactions on the tRNA convert PreQ1 to queuine (Q), resulting in the hypermodified nucleoside queuosine (7-(((4,5-cis-dihydroxy-2-cyclopenten-1-yl)amino)methyl)-7-deazaguanosine). The sequence is that of Queuine tRNA-ribosyltransferase from Streptococcus gordonii (strain Challis / ATCC 35105 / BCRC 15272 / CH1 / DL1 / V288).